The sequence spans 116 residues: Small ribosomal subunit protein bS16 (116 aa).

This sequence belongs to the bacterial ribosomal protein bS16 family.

This is Small ribosomal subunit protein bS16 from Chlamydia trachomatis serovar A (strain ATCC VR-571B / DSM 19440 / HAR-13).